The chain runs to 84 residues: MSLFGFLQRKPTAQVARNRLQILLAHERGLEGNADLAAILQEEIIAVIAKHVEIDREKVQVKLDRGSAFSTLEIDVEMPNGKKA.

Belongs to the MinE family.

Prevents the cell division inhibition by proteins MinC and MinD at internal division sites while permitting inhibition at polar sites. This ensures cell division at the proper site by restricting the formation of a division septum at the midpoint of the long axis of the cell. This is Cell division topological specificity factor from Granulibacter bethesdensis (strain ATCC BAA-1260 / CGDNIH1).